The chain runs to 432 residues: Adenylosuccinate synthetase (432 aa).

Residues 12–18 and 40–42 contribute to the GTP site; these read GDEGKGK and GHT. The active-site Proton acceptor is D13. 2 residues coordinate Mg(2+): D13 and G40. Residues 13-16, 38-41, T126, R140, Q219, T234, and R300 each bind IMP; these read DEGK and NAGH. The active-site Proton donor is H41. Residue 296–302 coordinates substrate; it reads STTGRPR. GTP is bound by residues R302, 328–330, and 410–412; these read KLD and STG.

The protein belongs to the adenylosuccinate synthetase family. Homodimer. It depends on Mg(2+) as a cofactor.

It localises to the cytoplasm. It carries out the reaction IMP + L-aspartate + GTP = N(6)-(1,2-dicarboxyethyl)-AMP + GDP + phosphate + 2 H(+). The protein operates within purine metabolism; AMP biosynthesis via de novo pathway; AMP from IMP: step 1/2. Functionally, plays an important role in the de novo pathway of purine nucleotide biosynthesis. Catalyzes the first committed step in the biosynthesis of AMP from IMP. The protein is Adenylosuccinate synthetase of Aquifex aeolicus (strain VF5).